A 223-amino-acid chain; its full sequence is UPF0502 protein Shew185_1758 (223 aa).

It belongs to the UPF0502 family.

This chain is UPF0502 protein Shew185_1758, found in Shewanella baltica (strain OS185).